The following is a 207-amino-acid chain: Large ribosomal subunit protein uL4 (207 aa).

A disordered region spans residues 44-76; it reads RRQGTQSTKTKSEVRGGGKKPWRQKGTGRARQG. Over residues 60 to 71 the composition is skewed to basic residues; the sequence is GGKKPWRQKGTG.

This sequence belongs to the universal ribosomal protein uL4 family. As to quaternary structure, part of the 50S ribosomal subunit.

Functionally, one of the primary rRNA binding proteins, this protein initially binds near the 5'-end of the 23S rRNA. It is important during the early stages of 50S assembly. It makes multiple contacts with different domains of the 23S rRNA in the assembled 50S subunit and ribosome. Its function is as follows. Forms part of the polypeptide exit tunnel. In Ruminiclostridium cellulolyticum (strain ATCC 35319 / DSM 5812 / JCM 6584 / H10) (Clostridium cellulolyticum), this protein is Large ribosomal subunit protein uL4.